The chain runs to 481 residues: Xylulose kinase (481 aa).

Gln81 to His82 contacts substrate. The active-site Proton acceptor is the Asp239.

Belongs to the FGGY kinase family.

The catalysed reaction is D-xylulose + ATP = D-xylulose 5-phosphate + ADP + H(+). Functionally, catalyzes the phosphorylation of D-xylulose to D-xylulose 5-phosphate. The protein is Xylulose kinase of Streptomyces coelicolor (strain ATCC BAA-471 / A3(2) / M145).